A 118-amino-acid chain; its full sequence is Holo-[acyl-carrier-protein] synthase (118 aa).

Asp8 and Glu58 together coordinate Mg(2+).

The protein belongs to the P-Pant transferase superfamily. AcpS family. It depends on Mg(2+) as a cofactor.

It localises to the cytoplasm. It carries out the reaction apo-[ACP] + CoA = holo-[ACP] + adenosine 3',5'-bisphosphate + H(+). Transfers the 4'-phosphopantetheine moiety from coenzyme A to a Ser of acyl-carrier-protein. In Streptococcus equi subsp. zooepidemicus (strain MGCS10565), this protein is Holo-[acyl-carrier-protein] synthase.